The chain runs to 269 residues: Aquaporin-1 (269 aa).

Topologically, residues Met-1–Trp-11 are cytoplasmic. Residues Arg-12–Ile-29 form a helical membrane-spanning segment. Residues Gly-30–Val-46 are Extracellular-facing. The helical transmembrane segment at Gln-47 to Gln-65 threads the bilayer. At Ser-66–Gly-68 the chain is on the cytoplasmic side. An intramembrane segment occupies His-69–Gly-82. The NPA 1 signature appears at Asn-76–Ala-78. Topologically, residues Leu-83–Ser-90 are cytoplasmic. The chain crosses the membrane as a helical span at residues Ile-91–Thr-109. Topologically, residues Ala-110 to Val-133 are extracellular. The chain crosses the membrane as a helical span at residues Asn-134–Val-153. The Cytoplasmic portion of the chain corresponds to Leu-154 to Asp-163. The chain crosses the membrane as a helical span at residues Leu-164–Leu-181. Over Leu-182–Tyr-186 the chain is Extracellular. The stretch at Thr-187 to Ser-199 is an intramembrane region. An NPA 2 motif is present at residues Asn-192–Ala-194. At Ala-200 to Phe-206 the chain is on the extracellular side. Asn-205 is a glycosylation site (N-linked (GlcNAc...) asparagine). Residues Ser-207 to Val-224 form a helical membrane-spanning segment. At Leu-225 to Lys-269 the chain is on the cytoplasmic side. The residue at position 247 (Ser-247) is a Phosphoserine. Tyr-253 is subject to Phosphotyrosine. Residue Ser-262 is modified to Phosphoserine.

It belongs to the MIP/aquaporin (TC 1.A.8) family. In terms of assembly, homotetramer; each monomer provides an independent water pore. Component of the ankyrin-1 complex in the erythrocyte, composed of ANK1, RHCE, RHAG, SLC4A1, EPB42, GYPA, GYPB and AQP1. Interacts with EPHB2; involved in endolymph production in the inner ear. Identified in a complex with STOM. Interacts (via the N-terminal) with ANK1 (via ANK 1-5 repeats). Interacts (via the C-terminal) with EPB42. In terms of tissue distribution, detected in erythrocytes (at protein level). In the kidney, expressed on luminal and basal borders of proximal tubules and in the thin limb of Henle's loop (at protein level).

It is found in the cell membrane. The enzyme catalyses H2O(in) = H2O(out). It catalyses the reaction nitric oxide(out) = nitric oxide(in). It carries out the reaction CO2(out) = CO2(in). The catalysed reaction is glycerol(in) = glycerol(out). The enzyme catalyses H2O2(out) = H2O2(in). It catalyses the reaction K(+)(in) = K(+)(out). It carries out the reaction Na(+)(in) = Na(+)(out). Its function is as follows. Forms a water channel that facilitates the transport of water across cell membranes, playing a crucial role in water homeostasis in various tissues. Could also be permeable to small solutes including hydrogen peroxide, glycerol and gases such as amonnia (NH3), nitric oxide (NO) and carbon dioxide (CO2). Recruited to the ankyrin-1 complex, a multiprotein complex of the erythrocyte membrane, it could be part of a CO2 metabolon, linking facilitated diffusion of CO2 across the membrane, anion exchange of Cl(-)/HCO3(-) and interconversion of dissolved CO2 and carbonic acid in the cytosol. In vitro, it shows non-selective gated cation channel activity and may be permeable to cations like K(+) and Na(+) in vivo. The sequence is that of Aquaporin-1 from Mus musculus (Mouse).